An 86-amino-acid chain; its full sequence is Mu-theraphotoxin-Hhn1b 1 (86 aa).

A signal peptide spans 1 to 21 (MKASMFLALAGLALLFVVCYA). Positions 22-49 (SESEEKEFSNELLSSVLAVDDNSKGEER) are excised as a propeptide. 3 disulfide bridges follow: Cys-51–Cys-66, Cys-58–Cys-73, and Cys-65–Cys-80. Position 84 is an isoleucine amide (Ile-84).

This sequence belongs to the neurotoxin 10 (Hwtx-1) family. 22 (Htx-4) subfamily. In terms of assembly, monomer. In terms of tissue distribution, expressed by the venom gland.

It localises to the secreted. Functionally, neurotoxin that selectively inhibits neuronal tetrodotoxin-sensitive voltage-gated sodium channels (Nav) (IC(50)=44.6 nM). It is active on Nav1.2/SCN2A (IC(50)=22.4 nM), Nav1.6/SCN8A (IC(50)=50.1 nM) and Nav1.7/SCN9A (IC(50)=48.9 nM). It shows low affinity for lipid bilayers. This chain is Mu-theraphotoxin-Hhn1b 1, found in Cyriopagopus hainanus (Chinese bird spider).